The following is a 213-amino-acid chain: Redox-sensing transcriptional repressor Rex (213 aa).

The segment at residues 16 to 55 is a DNA-binding region (H-T-H motif); sequence VYSRFLERMDRNGIVTVSSGEIAEGVGVSSAQVRKDLAYF. NAD(+) is bound at residue 90–95; the sequence is GAGNLG.

Belongs to the transcriptional regulatory Rex family. Homodimer.

The protein localises to the cytoplasm. Its function is as follows. Modulates transcription in response to changes in cellular NADH/NAD(+) redox state. This Pelotomaculum thermopropionicum (strain DSM 13744 / JCM 10971 / SI) protein is Redox-sensing transcriptional repressor Rex.